The following is a 678-amino-acid chain: Protein CASP (678 aa).

Residues M1 to T619 lie on the Cytoplasmic side of the membrane. Coiled-coil stretches lie at residues L67 to S450 and L502 to S556. S586 bears the Phosphoserine mark. Residues I620 to A640 form a helical; Anchor for type IV membrane protein membrane-spanning segment. Topologically, residues W641 to Q678 are lumenal.

This sequence belongs to the CASP family. As to quaternary structure, homodimer; disulfide-linked. Interacts with GOLGA5.

The protein resides in the golgi apparatus membrane. Functionally, may be involved in intra-Golgi retrograde transport. This is Protein CASP (CUTL1) from Pongo abelii (Sumatran orangutan).